Here is a 400-residue protein sequence, read N- to C-terminus: Elongation factor Tu (400 aa).

Residues Lys-10–Arg-210 enclose the tr-type G domain. Residues Gly-19–Thr-26 form a G1 region. A GTP-binding site is contributed by Gly-19–Thr-26. Residue Thr-26 coordinates Mg(2+). The segment at Gly-60–Ala-64 is G2. A G3 region spans residues Asp-81–Gly-84. GTP is bound by residues Asp-81–His-85 and Asn-136–Asp-139. Residues Asn-136–Asp-139 are G4. The interval Ser-174–Ile-176 is G5.

This sequence belongs to the TRAFAC class translation factor GTPase superfamily. Classic translation factor GTPase family. EF-Tu/EF-1A subfamily. As to quaternary structure, monomer.

It localises to the cytoplasm. The catalysed reaction is GTP + H2O = GDP + phosphate + H(+). In terms of biological role, GTP hydrolase that promotes the GTP-dependent binding of aminoacyl-tRNA to the A-site of ribosomes during protein biosynthesis. The sequence is that of Elongation factor Tu from Dehalococcoides mccartyi (strain CBDB1).